A 249-amino-acid polypeptide reads, in one-letter code: MSLCELAASGSSLLWPRVLLFGDSITQFSFQQGGWGTLLADRLVRKCDVLNRGFSGYNTRWAKIILPRIIRKGAGLENPVAVTIFFGANDSTLKDENPKQHVPLDEYSANLRDMVQYLRSVDIPKERVILITPPPLCEAAWEKECILKGCKLNRLNVAVGEYAKACLQVARDCGTDVLDLWTLMQKDNQDFSSYLSDGLHLSPLGNEFLFFHLWPLLDKKVSSLPRLLPDWKDVEETKPELSLLGDGDH.

The active-site Nucleophile is the Ser-24. Lys-63 carries the post-translational modification N6-succinyllysine. Asp-197 functions as the Proton donor in the catalytic mechanism. His-200 functions as the Proton acceptor in the catalytic mechanism.

The protein belongs to the 'GDSL' lipolytic enzyme family. IAH1 subfamily.

In terms of biological role, probable lipase. The sequence is that of Isoamyl acetate-hydrolyzing esterase 1 homolog (Iah1) from Rattus norvegicus (Rat).